A 229-amino-acid chain; its full sequence is 3-dehydroquinate dehydratase (229 aa).

3-dehydroquinate is bound by residues 33-35 (EWR) and Arg-65. The active-site Proton donor/acceptor is His-121. Lys-146 serves as the catalytic Schiff-base intermediate with substrate. The 3-dehydroquinate site is built by Arg-188, Ser-207, and Gln-211.

This sequence belongs to the type-I 3-dehydroquinase family. As to quaternary structure, homodimer.

It carries out the reaction 3-dehydroquinate = 3-dehydroshikimate + H2O. It functions in the pathway metabolic intermediate biosynthesis; chorismate biosynthesis; chorismate from D-erythrose 4-phosphate and phosphoenolpyruvate: step 3/7. Involved in the third step of the chorismate pathway, which leads to the biosynthesis of aromatic amino acids. Catalyzes the cis-dehydration of 3-dehydroquinate (DHQ) and introduces the first double bond of the aromatic ring to yield 3-dehydroshikimate. In Lactococcus lactis subsp. cremoris (strain SK11), this protein is 3-dehydroquinate dehydratase.